The following is a 142-amino-acid chain: UPF0179 protein PYRAB06360 (142 aa).

The protein belongs to the UPF0179 family.

The sequence is that of UPF0179 protein PYRAB06360 from Pyrococcus abyssi (strain GE5 / Orsay).